A 451-amino-acid polypeptide reads, in one-letter code: Phosphoglucosamine mutase (451 aa).

Catalysis depends on serine 104, which acts as the Phosphoserine intermediate. Mg(2+) is bound by residues serine 104, aspartate 249, aspartate 251, and aspartate 253. Residue serine 104 is modified to Phosphoserine.

Belongs to the phosphohexose mutase family. The cofactor is Mg(2+). Post-translationally, activated by phosphorylation.

The enzyme catalyses alpha-D-glucosamine 1-phosphate = D-glucosamine 6-phosphate. In terms of biological role, catalyzes the conversion of glucosamine-6-phosphate to glucosamine-1-phosphate. The polypeptide is Phosphoglucosamine mutase (Psychrobacter sp. (strain PRwf-1)).